Reading from the N-terminus, the 484-residue chain is Glutamate--tRNA ligase (484 aa).

The short motif at 11 to 21 (PSPTGYPHLGN) is the 'HIGH' region element. Residues C108, C110, C135, and D137 each coordinate Zn(2+). A 'KMSKS' region motif is present at residues 245 to 249 (KLSKR). K248 serves as a coordination point for ATP.

The protein belongs to the class-I aminoacyl-tRNA synthetase family. Glutamate--tRNA ligase type 1 subfamily. In terms of assembly, monomer. It depends on Zn(2+) as a cofactor.

It is found in the cytoplasm. It carries out the reaction tRNA(Glu) + L-glutamate + ATP = L-glutamyl-tRNA(Glu) + AMP + diphosphate. Catalyzes the attachment of glutamate to tRNA(Glu) in a two-step reaction: glutamate is first activated by ATP to form Glu-AMP and then transferred to the acceptor end of tRNA(Glu). The sequence is that of Glutamate--tRNA ligase from Dehalococcoides mccartyi (strain ATCC BAA-2266 / KCTC 15142 / 195) (Dehalococcoides ethenogenes (strain 195)).